A 194-amino-acid polypeptide reads, in one-letter code: Peptidyl-tRNA hydrolase (194 aa).

TRNA is bound at residue tyrosine 17. Histidine 22 functions as the Proton acceptor in the catalytic mechanism. TRNA-binding residues include tyrosine 69, asparagine 71, and asparagine 117.

Belongs to the PTH family. In terms of assembly, monomer.

The protein resides in the cytoplasm. The catalysed reaction is an N-acyl-L-alpha-aminoacyl-tRNA + H2O = an N-acyl-L-amino acid + a tRNA + H(+). Its function is as follows. Hydrolyzes ribosome-free peptidyl-tRNAs (with 1 or more amino acids incorporated), which drop off the ribosome during protein synthesis, or as a result of ribosome stalling. Functionally, catalyzes the release of premature peptidyl moieties from peptidyl-tRNA molecules trapped in stalled 50S ribosomal subunits, and thus maintains levels of free tRNAs and 50S ribosomes. The polypeptide is Peptidyl-tRNA hydrolase (Paenarthrobacter aurescens (strain TC1)).